We begin with the raw amino-acid sequence, 2495 residues long: Zinc finger protein 462 (2495 aa).

3 C2H2-type zinc fingers span residues 4–27 (LQCD…QDVH), 108–131 (FQCK…RKVH), and 162–185 (FSCQ…KMYH). Lysine 20 participates in a covalent cross-link: Glycyl lysine isopeptide (Lys-Gly) (interchain with G-Cter in SUMO1); alternate. Lysine 20 is covalently cross-linked (Glycyl lysine isopeptide (Lys-Gly) (interchain with G-Cter in SUMO2); alternate). An interaction with PBX1 region spans residues 215 to 241 (PCKELPAEVVERSILESMVKPLTKSRG). Residues lysine 234 and lysine 271 each participate in a glycyl lysine isopeptide (Lys-Gly) (interchain with G-Cter in SUMO2) cross-link. 3 disordered regions span residues 278-301 (QQEG…NSTY), 329-357 (RPNS…NSGL), and 370-395 (DMTN…DLNE). The span at 332-343 (SSSTSKFSSSMS) shows a compositional bias: low complexity. Residues lysine 337, lysine 348, and lysine 350 each participate in a glycyl lysine isopeptide (Lys-Gly) (interchain with G-Cter in SUMO2) cross-link. Residues serine 351 and serine 355 each carry the phosphoserine modification. The span at 370–387 (DMTNSSADLDTNSMLNDS) shows a compositional bias: polar residues. A Glycyl lysine isopeptide (Lys-Gly) (interchain with G-Cter in SUMO2) cross-link involves residue lysine 429. 2 consecutive C2H2-type zinc fingers follow at residues 440–463 (FQCP…ENIH) and 471–493 (YKCD…KQCH). A Glycyl lysine isopeptide (Lys-Gly) (interchain with G-Cter in SUMO2) cross-link involves residue lysine 485. Positions 492–590 (CHTGTSDWDT…PQPPTQAPPL (99 aa)) are disordered. Over residues 493–502 (HTGTSDWDTV) the composition is skewed to polar residues. Residues 503-515 (NSQSESLSSSLNE) are compositionally biased toward low complexity. The span at 542 to 590 (PPQPPPPLPPPPPPPSQPLPQPPPPPLQSPHQVPPPTQQPQPPTQAPPL) shows a compositional bias: pro residues. Residues 593 to 616 (YKCTMCSYSTMTLKGLRVHQQHKH) form a C2H2-type 6 zinc finger. Glycyl lysine isopeptide (Lys-Gly) (interchain with G-Cter in SUMO2) cross-links involve residues lysine 624, lysine 650, and lysine 661. A disordered region spans residues 629–654 (PSSLPLENETDSHPSSSNTVKKSQTS). Residues 641 to 654 (HPSSSNTVKKSQTS) are compositionally biased toward polar residues. A Phosphoserine modification is found at serine 681. Lysine 699 participates in a covalent cross-link: Glycyl lysine isopeptide (Lys-Gly) (interchain with G-Cter in SUMO2). 3 C2H2-type zinc fingers span residues 835-858 (YYCK…QRMH), 878-900 (YRCL…YGEH), and 917-940 (YRCR…QRMH). Lysine 978 participates in a covalent cross-link: Glycyl lysine isopeptide (Lys-Gly) (interchain with G-Cter in SUMO2). The disordered stretch occupies residues 980–999 (MATSTPVARGGGLPATFNKN). The C2H2-type 10 zinc-finger motif lies at 1023-1046 (YDCDVCSFASPNMHSVLVHYQKKH). Position 1083 is a phosphoserine (serine 1083). A Glycyl lysine isopeptide (Lys-Gly) (interchain with G-Cter in SUMO2) cross-link involves residue lysine 1128. Serine 1159 carries the phosphoserine modification. Glycyl lysine isopeptide (Lys-Gly) (interchain with G-Cter in SUMO2) cross-links involve residues lysine 1196, lysine 1204, lysine 1210, and lysine 1232. 2 consecutive C2H2-type zinc fingers follow at residues 1254 to 1277 (LKCR…KKDH) and 1459 to 1482 (YQCT…GKKH). Lysine 1488 is covalently cross-linked (Glycyl lysine isopeptide (Lys-Gly) (interchain with G-Cter in SUMO2)). The segment at 1504–1527 (YKCRHCPYINTRIHGVLTHYQKRH) adopts a C2H2-type 13 zinc-finger fold. Residues lysine 1560 and lysine 1580 each participate in a glycyl lysine isopeptide (Lys-Gly) (interchain with G-Cter in SUMO2) cross-link. 3 C2H2-type zinc fingers span residues 1566 to 1589 (YRCK…EKYH), 1649 to 1672 (FRCQ…RIKH), and 1686 to 1709 (FKCA…QKRH). Residues lysine 1687 and lysine 1769 each participate in a glycyl lysine isopeptide (Lys-Gly) (interchain with G-Cter in SUMO2) cross-link. The segment at 1881 to 1903 (FQCKHCDSKLQSIAELTSHLNIH) adopts a C2H2-type 17 zinc-finger fold. Residue lysine 1935 forms a Glycyl lysine isopeptide (Lys-Gly) (interchain with G-Cter in SUMO2) linkage. The segment at 1957–1981 (YKCKFCVEVHPTLRAICNHLRKHVQ) adopts a C2H2-type 18; degenerate zinc-finger fold. Residue lysine 1993 is modified to N6-methyllysine. C2H2-type zinc fingers lie at residues 2014-2037 (YSCQ…QTHH), 2043-2066 (FRCK…LKAH), and 2072-2095 (YKCS…LKVH). Lysine 2093 participates in a covalent cross-link: Glycyl lysine isopeptide (Lys-Gly) (interchain with G-Cter in SUMO2). Polar residues-rich tracts occupy residues 2112-2121 (SHAHPSSQKA) and 2132-2149 (DSSY…NHYQ). Residues 2112–2172 (SHAHPSSQKA…VPPSGTAAGT (61 aa)) are disordered. Residues serine 2161 and serine 2166 each carry the phosphoserine modification. 3 consecutive C2H2-type zinc fingers follow at residues 2180-2203 (LHCE…RDKH), 2209-2232 (FKCK…EAGH), and 2243-2265 (LRCP…IVLH). Lysine 2282 is covalently cross-linked (Glycyl lysine isopeptide (Lys-Gly) (interchain with G-Cter in SUMO2)). C2H2-type zinc fingers lie at residues 2289–2311 (FRCD…IEKH) and 2317–2340 (YKCQ…RDEH). The tract at residues 2361-2387 (KEKIESSSSEDEDKDDEMSSKAEDREL) is disordered. Residues 2377 to 2387 (EMSSKAEDREL) are compositionally biased toward basic and acidic residues. A C2H2-type 27 zinc finger spans residues 2403 to 2425 (FPCEFCGRAFSQGSEWERHVLRH). Lysine 2493 is covalently cross-linked (Glycyl lysine isopeptide (Lys-Gly) (interchain with G-Cter in SUMO2)).

In terms of assembly, interacts with PBX1 isoform PBX1b; this interaction prevents PBX1-HOXA9 heterodimer from forming and binding to DNA. As to expression, expressed in the cerebral cortex (at protein level). Expressed in embryonic stem cells (at protein level). Expressed in heart, liver, kidney, muscle, and female and male genital tracts (at protein level).

Its subcellular location is the nucleus. Zinc finger nuclear factor involved in transcription by regulating chromatin structure and organization. Involved in the pluripotency and differentiation of embryonic stem cells by regulating SOX2, POU5F1/OCT4, and NANOG. By binding PBX1, prevents the heterodimerization of PBX1 and HOXA9 and their binding to DNA. Regulates neuronal development and neural cell differentiation. The chain is Zinc finger protein 462 from Mus musculus (Mouse).